The sequence spans 143 residues: uncharacterized protein (143 aa).

In terms of domain architecture, HTH cro/C1-type spans 24-78 (IRQRRRWQNMSQAALGEAIGVTFQQVQKYEKGSNRVGAGRLQQISDALEVHPSYF). Residues 35–54 (QAALGEAIGVTFQQVQKYEK) constitute a DNA-binding region (H-T-H motif).

This is an uncharacterized protein from Sinorhizobium fredii (strain NBRC 101917 / NGR234).